A 317-amino-acid polypeptide reads, in one-letter code: 4-hydroxy-3-methylbut-2-enyl diphosphate reductase (317 aa).

Residue cysteine 12 coordinates [4Fe-4S] cluster. (2E)-4-hydroxy-3-methylbut-2-enyl diphosphate-binding residues include histidine 41 and histidine 74. 2 residues coordinate dimethylallyl diphosphate: histidine 41 and histidine 74. 2 residues coordinate isopentenyl diphosphate: histidine 41 and histidine 74. Cysteine 97 serves as a coordination point for [4Fe-4S] cluster. Histidine 125 serves as a coordination point for (2E)-4-hydroxy-3-methylbut-2-enyl diphosphate. Histidine 125 contributes to the dimethylallyl diphosphate binding site. Residue histidine 125 coordinates isopentenyl diphosphate. The active-site Proton donor is glutamate 127. A (2E)-4-hydroxy-3-methylbut-2-enyl diphosphate-binding site is contributed by threonine 168. A [4Fe-4S] cluster-binding site is contributed by cysteine 198. Residues serine 226, serine 227, asparagine 228, and serine 270 each coordinate (2E)-4-hydroxy-3-methylbut-2-enyl diphosphate. Residues serine 226, serine 227, asparagine 228, and serine 270 each contribute to the dimethylallyl diphosphate site. Isopentenyl diphosphate contacts are provided by serine 226, serine 227, asparagine 228, and serine 270.

Belongs to the IspH family. Homodimer. Requires [4Fe-4S] cluster as cofactor.

It carries out the reaction isopentenyl diphosphate + 2 oxidized [2Fe-2S]-[ferredoxin] + H2O = (2E)-4-hydroxy-3-methylbut-2-enyl diphosphate + 2 reduced [2Fe-2S]-[ferredoxin] + 2 H(+). The catalysed reaction is dimethylallyl diphosphate + 2 oxidized [2Fe-2S]-[ferredoxin] + H2O = (2E)-4-hydroxy-3-methylbut-2-enyl diphosphate + 2 reduced [2Fe-2S]-[ferredoxin] + 2 H(+). Its pathway is isoprenoid biosynthesis; dimethylallyl diphosphate biosynthesis; dimethylallyl diphosphate from (2E)-4-hydroxy-3-methylbutenyl diphosphate: step 1/1. The protein operates within isoprenoid biosynthesis; isopentenyl diphosphate biosynthesis via DXP pathway; isopentenyl diphosphate from 1-deoxy-D-xylulose 5-phosphate: step 6/6. In terms of biological role, catalyzes the conversion of 1-hydroxy-2-methyl-2-(E)-butenyl 4-diphosphate (HMBPP) into a mixture of isopentenyl diphosphate (IPP) and dimethylallyl diphosphate (DMAPP). Acts in the terminal step of the DOXP/MEP pathway for isoprenoid precursor biosynthesis. In Yersinia pseudotuberculosis serotype O:1b (strain IP 31758), this protein is 4-hydroxy-3-methylbut-2-enyl diphosphate reductase.